Reading from the N-terminus, the 172-residue chain is Zinc finger C2HC domain-containing protein 1B (172 aa).

2 C2HC/C3H-type zinc fingers span residues 14–43 (KLFP…VFNK) and 117–146 (DYIQ…QTSR). Zn(2+)-binding residues include Cys18, Cys21, His33, Cys37, Cys121, Cys124, His136, and Cys140.

This sequence belongs to the ZC2HC1 family. Zn(2+) serves as cofactor.

In Mus musculus (Mouse), this protein is Zinc finger C2HC domain-containing protein 1B (Zc2hc1b).